Here is a 41-residue protein sequence, read N- to C-terminus: Minor histocompatibility protein HB-1 (41 aa).

The segment at 9 to 17 (EEKRGSLHV) is loss of recognition by cytotoxic T lymphocyte (CTL).

HB-1 forms a complex with MHC class I HLA-B44. In terms of tissue distribution, expressed in acute lymphoblastic leukemia B-cells and Epstein-Barr virus-transformed B-cells.

In terms of biological role, precursor of the histocomplatibility antigen HB-1. More generally, minor histocomplatibility antigens (mHags) refer to immunogenic peptide which, when complexed with MHC, can generate an immune response after recognition by specific T-cells. The peptides are derived from polymorphic intracellular proteins, which are cleaved by normal pathways of antigen processing. The binding of these peptides to MHC class I or class II molecules and its expression on the cell surface can stimulate T-cell responses and thereby trigger graft rejection or graft-versus-host disease (GVHD) after hematopoietic stem cell transplantation from HLA-identical sibling donor. GVHD is a frequent complication after bone marrow transplantation (BMT), due to mismatch of minor histocomplatibility antigen in HLA-matched sibling marrow transplants. HB-1 is presented on the cell surface by MHC class I HLA-B44. This complex specifically elicits donor-cytotoxic T lymphocyte (CTL) reactivity in B-cell acute lymphoblastic leukemia (B-ALL) after treatment by HLA-identical allogenic bone marrow transplantation (BMT). It induces cell recognition and lysis by CTL. However, HB-1 restricted expression in B-ALL cells and not in normal tissues may allow a specific CTL reactivity against B-ALL without the risk of evoking graft-versus-host disease. This chain is Minor histocompatibility protein HB-1 (HMHB1), found in Homo sapiens (Human).